A 644-amino-acid chain; its full sequence is Cell pattern formation-associated protein StuA (644 aa).

The segment covering Ala18 to His33 has biased composition (low complexity). Disordered regions lie at residues Ala18–Pro58 and Gln86–Gly120. A compositionally biased stretch (polar residues) spans Pro38–Gln47. Over residues Leu87 to Ser104 the composition is skewed to low complexity. Residues Arg124–Pro230 form the HTH APSES-type domain. The segment at residues Gly158–Glu179 is a DNA-binding region (H-T-H motif). The interval Gly239–Arg644 is disordered. Polar residues predominate over residues Ser253 to Pro269. Over residues Ser315–Ser328 the composition is skewed to low complexity. Composition is skewed to polar residues over residues Ala334 to Val357, Gln371 to Asn383, and Pro395 to Ser404. Residues Glu456 to Tyr465 are compositionally biased toward basic and acidic residues. Positions Gly509–Gln524 are enriched in low complexity. Polar residues predominate over residues Trp525–Asn544. The tract at residues Lys584–Lys612 is nuclear localization domain. Positions His635–Arg644 are enriched in polar residues.

The protein belongs to the EFG1/PHD1/stuA family.

Its subcellular location is the nucleus. Functionally, transcription factor that regulates asexual reproduction. Binds the StuA-response elements (StRE) with the consensus sequence 5'-(A/T)CGCG(T/A)N(A/C)-3' at the promoters of target genes. Required for pathogenicity and positively regulates the synthesis of the mycotoxin alternariol. Acts as a positive regulator of Tox3 but is not required for the expression of ToxA. Also acts as a central regulator of carbon metabolism including glycolysis, the TCA cycle, and amino acid synthesis. The protein is Cell pattern formation-associated protein StuA of Phaeosphaeria nodorum (strain SN15 / ATCC MYA-4574 / FGSC 10173) (Glume blotch fungus).